Reading from the N-terminus, the 257-residue chain is 5-keto-4-deoxy-D-glucarate aldolase (257 aa).

The active-site Proton acceptor is the His-51. Gln-152 is a substrate binding site. Glu-154 is a binding site for Mg(2+). 2 residues coordinate substrate: Ser-179 and Asp-180. Asp-180 is a Mg(2+) binding site.

This sequence belongs to the HpcH/HpaI aldolase family. KDGluc aldolase subfamily. In terms of assembly, homohexamer; trimer of dimers. Requires Mg(2+) as cofactor.

It carries out the reaction 5-dehydro-4-deoxy-D-glucarate = 2-hydroxy-3-oxopropanoate + pyruvate. The enzyme catalyses 2-dehydro-3-deoxy-D-glucarate = 2-hydroxy-3-oxopropanoate + pyruvate. The protein operates within carbohydrate acid metabolism; galactarate degradation; D-glycerate from galactarate: step 2/3. Catalyzes the reversible retro-aldol cleavage of both 5-keto-4-deoxy-D-glucarate and 2-keto-3-deoxy-D-glucarate to pyruvate and tartronic semialdehyde. The chain is 5-keto-4-deoxy-D-glucarate aldolase from Citrobacter koseri (strain ATCC BAA-895 / CDC 4225-83 / SGSC4696).